A 201-amino-acid chain; its full sequence is MEEKNHIYPIFDRMMTREDKEELLGQHSVMIWFTGLSGSGKSTIAIALERELHKRGLLCRILDGDNIRSGINNNLGFSETDRVENIRRIAEVSKLFLDSGIITIAAFISPNNDIREMAANIIGKDDFLEVFVSTPLEECEKRDVKGLYAKARKGEIQNFTGISAPFEVPEHPALALDTSKLSLEESVNRLLEMVLPKIEKK.

Residue 35–42 (GLSGSGKS) coordinates ATP. The active-site Phosphoserine intermediate is the Ser109.

Belongs to the APS kinase family.

The catalysed reaction is adenosine 5'-phosphosulfate + ATP = 3'-phosphoadenylyl sulfate + ADP + H(+). The protein operates within sulfur metabolism; hydrogen sulfide biosynthesis; sulfite from sulfate: step 2/3. Catalyzes the synthesis of activated sulfate. This chain is Adenylyl-sulfate kinase, found in Bacteroides thetaiotaomicron (strain ATCC 29148 / DSM 2079 / JCM 5827 / CCUG 10774 / NCTC 10582 / VPI-5482 / E50).